The sequence spans 1802 residues: Protein TIC 214 (1802 aa).

The next 6 helical transmembrane spans lie at 19–39, 68–88, 91–111, 133–153, 176–196, and 227–247; these read IINS…FSIG, FIAG…HLAL, PHTI…WNNH, VFLN…SSML, VGWL…LVWI, and IFSI…PSPI.

This sequence belongs to the TIC214 family. Part of the Tic complex.

It localises to the plastid. The protein resides in the chloroplast inner membrane. Its function is as follows. Involved in protein precursor import into chloroplasts. May be part of an intermediate translocation complex acting as a protein-conducting channel at the inner envelope. The sequence is that of Protein TIC 214 from Nasturtium officinale (Watercress).